Consider the following 452-residue polypeptide: Tubulin alpha-1D chain (452 aa).

Positions 1–4 (MREC) match the MREC motif motif. Residue Gln11 coordinates GTP. Lys40 is modified (N6-acetyllysine). 7 residues coordinate GTP: Glu71, Ser140, Gly144, Thr145, Thr179, Asn206, and Asn228. A Mg(2+)-binding site is contributed by Glu71. The active site involves Glu254. Tyr282 bears the 3'-nitrotyrosine mark. The disordered stretch occupies residues 432-452 (YEEVGMDSVEGEGEEEEGDEY). Residue Ser439 is modified to Phosphoserine. At Glu446 the chain carries 5-glutamyl polyglutamate. 3'-nitrotyrosine is present on Tyr452.

It belongs to the tubulin family. In terms of assembly, dimer of alpha and beta chains. A typical microtubule is a hollow water-filled tube with an outer diameter of 25 nm and an inner diameter of 15 nM. Alpha-beta heterodimers associate head-to-tail to form protofilaments running lengthwise along the microtubule wall with the beta-tubulin subunit facing the microtubule plus end conferring a structural polarity. Microtubules usually have 13 protofilaments but different protofilament numbers can be found in some organisms and specialized cells. It depends on Mg(2+) as a cofactor. Post-translationally, some glutamate residues at the C-terminus are polyglycylated, resulting in polyglycine chains on the gamma-carboxyl group. Glycylation is mainly limited to tubulin incorporated into axonemes (cilia and flagella) whereas glutamylation is prevalent in neuronal cells, centrioles, axonemes, and the mitotic spindle. Both modifications can coexist on the same protein on adjacent residues, and lowering polyglycylation levels increases polyglutamylation, and reciprocally. Cilia and flagella glycylation is required for their stability and maintenance. Flagella glycylation controls sperm motility. In terms of processing, some glutamate residues at the C-terminus are polyglutamylated, resulting in polyglutamate chains on the gamma-carboxyl group. Polyglutamylation plays a key role in microtubule severing by spastin (SPAST). SPAST preferentially recognizes and acts on microtubules decorated with short polyglutamate tails: severing activity by SPAST increases as the number of glutamates per tubulin rises from one to eight, but decreases beyond this glutamylation threshold. Glutamylation is also involved in cilia motility. Acetylation of alpha chains at Lys-40 is located inside the microtubule lumen. This modification has been correlated with increased microtubule stability, intracellular transport and ciliary assembly. Post-translationally, methylation of alpha chains at Lys-40 is found in mitotic microtubules and is required for normal mitosis and cytokinesis contributing to genomic stability. In terms of processing, nitration of Tyr-452 is irreversible and interferes with normal dynein intracellular distribution. Undergoes a tyrosination/detyrosination cycle, the cyclic removal and re-addition of a C-terminal tyrosine residue by the enzymes tubulin tyrosine carboxypeptidase (MATCAP, VASH1 or VASH2) and tubulin tyrosine ligase (TTL), respectively. Post-translationally, tyrosination promotes microtubule interaction with CAP-Gly domain-containing proteins such as CLIP1, CLIP2 and DCTN1. Tyrosination regulates the initiation of dynein-dynactin motility via interaction with DCTN1, which brings the dynein-dynactin complex into contact with microtubules. In neurons, tyrosinated tubulins mediate the initiation of retrograde vesicle transport. In terms of processing, detyrosination is involved in metaphase plate congression by guiding chromosomes during mitosis: detyrosination promotes interaction with CENPE, promoting pole-proximal transport of chromosomes toward the equator. Detyrosination increases microtubules-dependent mechanotransduction in dystrophic cardiac and skeletal muscle. In cardiomyocytes, detyrosinated microtubules are required to resist to contractile compression during contraction: detyrosination promotes association with desmin (DES) at force-generating sarcomeres, leading to buckled microtubules and mechanical resistance to contraction.

The protein localises to the cytoplasm. Its subcellular location is the cytoskeleton. The catalysed reaction is GTP + H2O = GDP + phosphate + H(+). In terms of biological role, tubulin is the major constituent of microtubules, a cylinder consisting of laterally associated linear protofilaments composed of alpha- and beta-tubulin heterodimers. Microtubules grow by the addition of GTP-tubulin dimers to the microtubule end, where a stabilizing cap forms. Below the cap, tubulin dimers are in GDP-bound state, owing to GTPase activity of alpha-tubulin. This chain is Tubulin alpha-1D chain (TUBA1D), found in Bos taurus (Bovine).